A 78-amino-acid polypeptide reads, in one-letter code: Small ribosomal subunit protein bS18 (78 aa).

Belongs to the bacterial ribosomal protein bS18 family. In terms of assembly, part of the 30S ribosomal subunit. Forms a tight heterodimer with protein bS6.

In terms of biological role, binds as a heterodimer with protein bS6 to the central domain of the 16S rRNA, where it helps stabilize the platform of the 30S subunit. This is Small ribosomal subunit protein bS18 from Limosilactobacillus reuteri (strain DSM 20016) (Lactobacillus reuteri).